A 185-amino-acid polypeptide reads, in one-letter code: Ribosome maturation factor RimM (185 aa).

Residues 106-185 (SGEYYWKDLL…IIEVDWDPGF (80 aa)) form the PRC barrel domain.

The protein belongs to the RimM family. As to quaternary structure, binds ribosomal protein uS19.

Its subcellular location is the cytoplasm. In terms of biological role, an accessory protein needed during the final step in the assembly of 30S ribosomal subunit, possibly for assembly of the head region. Essential for efficient processing of 16S rRNA. May be needed both before and after RbfA during the maturation of 16S rRNA. It has affinity for free ribosomal 30S subunits but not for 70S ribosomes. The polypeptide is Ribosome maturation factor RimM (Sodalis glossinidius (strain morsitans)).